Consider the following 101-residue polypeptide: Small ribosomal subunit protein uS14 (101 aa).

This sequence belongs to the universal ribosomal protein uS14 family. As to quaternary structure, part of the 30S ribosomal subunit. Contacts proteins S3 and S10.

Functionally, binds 16S rRNA, required for the assembly of 30S particles and may also be responsible for determining the conformation of the 16S rRNA at the A site. This Brucella anthropi (strain ATCC 49188 / DSM 6882 / CCUG 24695 / JCM 21032 / LMG 3331 / NBRC 15819 / NCTC 12168 / Alc 37) (Ochrobactrum anthropi) protein is Small ribosomal subunit protein uS14.